We begin with the raw amino-acid sequence, 928 residues long: Tyrosine-protein phosphatase 3 (928 aa).

Thr-75 carries the post-translational modification Phosphothreonine. In terms of domain architecture, Rhodanese spans 111 to 232 (PDEKVLLLDV…FKILFPDHIN (122 aa)). Positions 247–307 (KSPKTNLMNS…PRNVLSDSPM (61 aa)) are disordered. Position 248 is a phosphoserine (Ser-248). Polar residues-rich tracts occupy residues 249 to 259 (PKTNLMNSLHN) and 265 to 275 (TATTPLSSPQM). Residues 280–289 (KVPDDSRSDH) show a composition bias toward basic and acidic residues. The segment covering 290–307 (SNFSSSPSPRNVLSDSPM) has biased composition (low complexity). Phosphoserine occurs at positions 297 and 368. Disordered stretches follow at residues 467–487 (LTST…NKVQ) and 672–713 (MRKN…NNNN). The Tyrosine-protein phosphatase domain occupies 502–878 (YKSMLSLESD…IFIYDCLLFY (377 aa)). Polar residues predominate over residues 672-691 (MRKNTMGTQNSSLYSAGVQG). The segment covering 692 to 713 (NSSNYSTDNDNDNDNNNNNNNN) has biased composition (low complexity). The Phosphocysteine intermediate role is filled by Cys-804.

This sequence belongs to the protein-tyrosine phosphatase family. Non-receptor class subfamily. In terms of assembly, interacts with HOG1.

It is found in the cytoplasm. The catalysed reaction is O-phospho-L-tyrosyl-[protein] + H2O = L-tyrosyl-[protein] + phosphate. Its function is as follows. Major phosphatase responsible for tyrosine dephosphorylation of MAP kinases FUS3 and HOG1 to inactivate their activity; it also has important roles, along with MSG5, in the inactivation of FUS3 following pheromone stimulation. The protein is Tyrosine-protein phosphatase 3 (PTP3) of Saccharomyces cerevisiae (strain ATCC 204508 / S288c) (Baker's yeast).